The sequence spans 178 residues: Bifunctional protein PyrR (178 aa).

Positions valine 97–threonine 109 match the PRPP-binding motif.

It belongs to the purine/pyrimidine phosphoribosyltransferase family. PyrR subfamily.

It catalyses the reaction UMP + diphosphate = 5-phospho-alpha-D-ribose 1-diphosphate + uracil. Functionally, regulates the transcription of the pyrimidine nucleotide (pyr) operon in response to exogenous pyrimidines. Also displays a weak uracil phosphoribosyltransferase activity which is not physiologically significant. In Herpetosiphon aurantiacus (strain ATCC 23779 / DSM 785 / 114-95), this protein is Bifunctional protein PyrR.